A 483-amino-acid polypeptide reads, in one-letter code: BTB/POZ domain and ankyrin repeat-containing protein COCH (483 aa).

In terms of domain architecture, BTB spans serine 25–proline 105. The C2HC NPR-type zinc-finger motif lies at arginine 111–threonine 125. Residues cysteine 114, cysteine 119, histidine 121, and cysteine 124 each contribute to the Zn(2+) site. ANK repeat units lie at residues glutamine 249 to aspartate 278, glutamate 279 to phenylalanine 308, threonine 313 to valine 342, and aspartate 346 to leucine 380. Disordered regions lie at residues glutamate 395–methionine 435 and methionine 450–tyrosine 483. Over residues asparagine 398–asparagine 414 the composition is skewed to low complexity. Positions aspartate 456–asparagine 465 are enriched in basic and acidic residues.

This sequence belongs to the plant 'ANKYRIN-BTB/POZ' family. 'NOOT-BOP-COCH-like' (NBCL) subfamily. In terms of assembly, homodimer.

It localises to the nucleus. The protein resides in the cytoplasm. It is found in the cell membrane. Its pathway is protein modification; protein ubiquitination. Its function is as follows. May act as a substrate-specific adapter of an E3 ubiquitin-protein ligase complex (CUL3-RBX1-BTB) which mediates the ubiquitination and subsequent proteasomal degradation of target proteins. Transcriptional co-regulator involved in the promotion of leaf and floral meristem fate and determinacy. Promotes normal stipule growth and development. Required for the abscission of senescent organs, probably by regulating the cell wall disorganization in abscission zones (AZs, e.g. pulvini at the base of leaves). Down-regulates UNI expression in primordia of leaves and secondary inflorescences, and thereby controls their sizes and/or structures. Involved in the coordination of the symbiotic nodule developmental program. Promotes the formation of root nodules by interacting directly with APP1 to modulate the expression of the nuclear transcription factor Y subunit (NF-YA1), a key nodulin. Necessary for the robust maintenance of nodule identity throughout the nodule developmental program. The polypeptide is BTB/POZ domain and ankyrin repeat-containing protein COCH (Pisum sativum (Garden pea)).